Here is a 108-residue protein sequence, read N- to C-terminus: Small ribosomal subunit protein bS18c (108 aa).

2 stretches are compositionally biased toward basic residues: residues 1 to 19 (MDKS…RRRL) and 97 to 108 (RARKKKIGLLLN). 2 disordered regions span residues 1–23 (MDKS…PPIG) and 83–108 (QFER…LLLN).

This sequence belongs to the bacterial ribosomal protein bS18 family. Part of the 30S ribosomal subunit.

The protein localises to the plastid. It is found in the chloroplast. The polypeptide is Small ribosomal subunit protein bS18c (Illicium oligandrum (Star anise)).